Here is a 302-residue protein sequence, read N- to C-terminus: tRNA demethylase abh1 (302 aa).

Substrate-binding positions include Trp-142 and 149–151 (YDW). A Fe2OG dioxygenase domain is found at 187-299 (KAEAAIVNFY…RVNFNVRQVR (113 aa)). 194-196 (NFY) is a 2-oxoglutarate binding site. Residues His-205 and Asp-207 each coordinate Fe cation. Arg-235 serves as a coordination point for substrate. Position 261 (His-261) interacts with Fe cation. 2-oxoglutarate is bound at residue 290–296 (RVNFNVR).

Belongs to the alkB family. Fe(2+) is required as a cofactor.

It is found in the cytoplasm. Its subcellular location is the nucleus. It catalyses the reaction an N(1)-methyladenosine in tRNA + 2-oxoglutarate + O2 = an adenosine in tRNA + formaldehyde + succinate + CO2. It carries out the reaction N(1)-methyladenosine(58) in tRNA + 2-oxoglutarate + O2 = adenosine(58) in tRNA + formaldehyde + succinate + CO2. Functionally, dioxygenase that acts as on nucleic acids, such as DNA and tRNA. Requires molecular oxygen, alpha-ketoglutarate and iron. Mainly acts as a tRNA demethylase by removing N(1)-methyladenine from various tRNAs, with a preference for N(1)-methyladenine at position 58 (m1A58) present on a stem loop structure of tRNAs. Acts as a regulator of translation initiation and elongation. Does not appear to possess DNA repair activity; no activity towards methylated DNA or etheno adducts. Exhibits a weak and unstable DNA lyase activity; this activity is probably not biologically significant and proceeds by a mechanism different from the classical dioxygenase reaction as it does not require 2-oxoglutarate or iron. The polypeptide is tRNA demethylase abh1 (abh1) (Schizosaccharomyces pombe (strain 972 / ATCC 24843) (Fission yeast)).